The sequence spans 363 residues: Probable L-tyrosine/L-aspartate decarboxylase (363 aa).

N6-(pyridoxal phosphate)lysine is present on Lys-224.

It belongs to the group II decarboxylase family. MfnA subfamily. The cofactor is pyridoxal 5'-phosphate.

The enzyme catalyses L-tyrosine + H(+) = tyramine + CO2. The catalysed reaction is L-aspartate + H(+) = beta-alanine + CO2. It participates in cofactor biosynthesis; methanofuran biosynthesis. The protein operates within cofactor biosynthesis; coenzyme A biosynthesis. Catalyzes the decarboxylation of L-tyrosine to produce tyramine for methanofuran biosynthesis. Can also catalyze the decarboxylation of L-aspartate to produce beta-alanine for coenzyme A (CoA) biosynthesis. This chain is Probable L-tyrosine/L-aspartate decarboxylase, found in Methanosphaerula palustris (strain ATCC BAA-1556 / DSM 19958 / E1-9c).